The sequence spans 80 residues: Translation initiation factor IF-1, chloroplastic (80 aa).

The 72-residue stretch at Met1–Arg72 folds into the S1-like domain.

It belongs to the IF-1 family. As to quaternary structure, component of the 30S ribosomal translation pre-initiation complex which assembles on the 30S ribosome in the order IF-2 and IF-3, IF-1 and N-formylmethionyl-tRNA(fMet); mRNA recruitment can occur at any time during PIC assembly.

Its subcellular location is the plastid. The protein resides in the chloroplast. In terms of biological role, one of the essential components for the initiation of protein synthesis. Stabilizes the binding of IF-2 and IF-3 on the 30S subunit to which N-formylmethionyl-tRNA(fMet) subsequently binds. Helps modulate mRNA selection, yielding the 30S pre-initiation complex (PIC). Upon addition of the 50S ribosomal subunit IF-1, IF-2 and IF-3 are released leaving the mature 70S translation initiation complex. This chain is Translation initiation factor IF-1, chloroplastic, found in Psilotum nudum (Whisk fern).